The following is a 126-amino-acid chain: Glycine cleavage system H protein (126 aa).

A Lipoyl-binding domain is found at valine 22–lysine 104. Lysine 63 carries the post-translational modification N6-lipoyllysine.

This sequence belongs to the GcvH family. As to quaternary structure, the glycine cleavage system is composed of four proteins: P, T, L and H. (R)-lipoate is required as a cofactor.

The glycine cleavage system catalyzes the degradation of glycine. The H protein shuttles the methylamine group of glycine from the P protein to the T protein. The protein is Glycine cleavage system H protein of Bacteroides fragilis (strain ATCC 25285 / DSM 2151 / CCUG 4856 / JCM 11019 / LMG 10263 / NCTC 9343 / Onslow / VPI 2553 / EN-2).